Consider the following 226-residue polypeptide: 7-cyano-7-deazaguanine synthase (226 aa).

Position 10–20 (10–20 (LSGGLDSATAA)) interacts with ATP. Zn(2+) contacts are provided by cysteine 191, cysteine 199, cysteine 202, and cysteine 205.

This sequence belongs to the QueC family. The cofactor is Zn(2+).

It catalyses the reaction 7-carboxy-7-deazaguanine + NH4(+) + ATP = 7-cyano-7-deazaguanine + ADP + phosphate + H2O + H(+). Its pathway is purine metabolism; 7-cyano-7-deazaguanine biosynthesis. In terms of biological role, catalyzes the ATP-dependent conversion of 7-carboxy-7-deazaguanine (CDG) to 7-cyano-7-deazaguanine (preQ(0)). The sequence is that of 7-cyano-7-deazaguanine synthase from Synechococcus sp. (strain CC9902).